A 526-amino-acid chain; its full sequence is tRNA modification GTPase MSS1, mitochondrial (526 aa).

The N-terminal 19 residues, 1 to 19 (MNSASFLQSRLISRSFLVR), are a transit peptide targeting the mitochondrion. The TrmE-type G domain maps to 274–444 (GIKLVLLGAP…LISTLTSNFE (171 aa)). Residues 281–288 (GAPNVGKS), 328–332 (DTAGI), and 394–397 (NKSD) each bind GTP.

Belongs to the TRAFAC class TrmE-Era-EngA-EngB-Septin-like GTPase superfamily. TrmE GTPase family. In terms of assembly, forms a heterodimer with MTO1.

It localises to the mitochondrion. Its function is as follows. GTPase involved in the 5-carboxymethylaminomethyl modification (mnm(5)s(2)U34) of the wobble uridine base in mitochondrial tRNAs. Involved in the expression of cytochrome c oxidase subunit 1 (COX1). Works in association with the small subunit of mitoribosomes. This is tRNA modification GTPase MSS1, mitochondrial (MSS1) from Saccharomyces cerevisiae (strain ATCC 204508 / S288c) (Baker's yeast).